Here is an 83-residue protein sequence, read N- to C-terminus: Large ribosomal subunit protein bL27 (83 aa).

A disordered region spans residues 1–26; the sequence is MAHKKAGGSSKNGRDSRGQRRGVKRF.

The protein belongs to the bacterial ribosomal protein bL27 family.

This is Large ribosomal subunit protein bL27 from Desulfosudis oleivorans (strain DSM 6200 / JCM 39069 / Hxd3) (Desulfococcus oleovorans).